The primary structure comprises 156 residues: 6,7-dimethyl-8-ribityllumazine synthase (156 aa).

5-amino-6-(D-ribitylamino)uracil-binding positions include F22, 56 to 58, and 80 to 82; these read ALE and AVI. 85–86 contacts (2S)-2-hydroxy-3-oxobutyl phosphate; it reads DT. The Proton donor role is filled by H88. F113 serves as a coordination point for 5-amino-6-(D-ribitylamino)uracil. R127 contacts (2S)-2-hydroxy-3-oxobutyl phosphate.

It belongs to the DMRL synthase family.

It catalyses the reaction (2S)-2-hydroxy-3-oxobutyl phosphate + 5-amino-6-(D-ribitylamino)uracil = 6,7-dimethyl-8-(1-D-ribityl)lumazine + phosphate + 2 H2O + H(+). It participates in cofactor biosynthesis; riboflavin biosynthesis; riboflavin from 2-hydroxy-3-oxobutyl phosphate and 5-amino-6-(D-ribitylamino)uracil: step 1/2. Catalyzes the formation of 6,7-dimethyl-8-ribityllumazine by condensation of 5-amino-6-(D-ribitylamino)uracil with 3,4-dihydroxy-2-butanone 4-phosphate. This is the penultimate step in the biosynthesis of riboflavin. The chain is 6,7-dimethyl-8-ribityllumazine synthase from Leuconostoc mesenteroides subsp. mesenteroides (strain ATCC 8293 / DSM 20343 / BCRC 11652 / CCM 1803 / JCM 6124 / NCDO 523 / NBRC 100496 / NCIMB 8023 / NCTC 12954 / NRRL B-1118 / 37Y).